Here is a 419-residue protein sequence, read N- to C-terminus: UDP-N-acetylglucosamine 1-carboxyvinyltransferase (419 aa).

Residue 22-23 (KN) coordinates phosphoenolpyruvate. Position 92 (Arg92) interacts with UDP-N-acetyl-alpha-D-glucosamine. Cys116 acts as the Proton donor in catalysis. Cys116 carries the 2-(S-cysteinyl)pyruvic acid O-phosphothioketal modification. Residues 121–125 (RPIDL), Asp306, and Ile328 each bind UDP-N-acetyl-alpha-D-glucosamine.

It belongs to the EPSP synthase family. MurA subfamily.

It is found in the cytoplasm. The enzyme catalyses phosphoenolpyruvate + UDP-N-acetyl-alpha-D-glucosamine = UDP-N-acetyl-3-O-(1-carboxyvinyl)-alpha-D-glucosamine + phosphate. It participates in cell wall biogenesis; peptidoglycan biosynthesis. Cell wall formation. Adds enolpyruvyl to UDP-N-acetylglucosamine. Target for the antibiotic fosfomycin. Involved in heteroresistance to antibiotic fosfomycin. Heteroresistance is the ability of a clonal population to grow one or several subpopulations at a frequency of 10(-7) to 10(-3) in the presence of a higher antibiotic concentration than that predicted to be effective by measurement of the minimum inhibitory concentration (MIC). In Streptococcus pneumoniae serotype 2 (strain D39 / NCTC 7466), this protein is UDP-N-acetylglucosamine 1-carboxyvinyltransferase.